The following is a 652-amino-acid chain: Endoplasmic reticulum chaperone BiP (652 aa).

The N-terminal stretch at 1–16 is a signal peptide; the sequence is MRHLLLALLLLGGARA. ATP is bound by residues 34–37, Lys-94, 225–227, 291–298, and 362–365; these read GTTY, GGT, EKAKRALS, and GSTR. The segment at 123 to 278 is nucleotide-binding (NBD); the sequence is KPHIQVDVGG…KKKTGKDVRK (156 aa). The segment at 407-417 is interdomain linker; it reads QDTGDLVLLDV. Residues 418 to 498 form a substrate-binding (SBD) region; the sequence is CPLTLGIETV…PRGVPQIEVT (81 aa). The tract at residues 630 to 652 is disordered; the sequence is SKLYGSAGPPPTGEEEAAEKDEL. Acidic residues predominate over residues 642 to 652; sequence GEEEAAEKDEL. The Prevents secretion from ER motif lies at 649–652; that stretch reads KDEL.

This sequence belongs to the heat shock protein 70 family. In terms of assembly, monomer and homooligomer; homooligomerization via the interdomain linker inactivates the chaperone activity and acts as a storage of HSPA5/BiP molecules. Interacts with DNAJC10. Interacts with DNAJB9/ERdj4; leading to recruit HSPA5/BiP to ERN1/IRE1. Interacts with ERN1/IRE1; interaction takes place following interaction with DNAJB9/ERdj4 and leads to inactivate ERN1/IRE1.

It localises to the endoplasmic reticulum lumen. The protein resides in the melanosome. Its subcellular location is the cytoplasm. It is found in the cell surface. The enzyme catalyses ATP + H2O = ADP + phosphate + H(+). Its activity is regulated as follows. The chaperone activity is regulated by ATP-induced allosteric coupling of the nucleotide-binding (NBD) and substrate-binding (SBD) domains. In the ADP-bound and nucleotide-free (apo) states, the two domains have little interaction. In contrast, in the ATP-bound state the two domains are tightly coupled, which results in drastically accelerated kinetics in both binding and release of polypeptide substrates. J domain-containing co-chaperones (DNAJB9/ERdj4 or DNAJC10/ERdj5) stimulate the ATPase activity and are required for efficient substrate recognition by HSPA5/BiP. Homooligomerization inactivates participating HSPA5/BiP protomers and probably act as reservoirs to store HSPA5/BiP molecules when they are not needed by the cell. In terms of biological role, endoplasmic reticulum chaperone that plays a key role in protein folding and quality control in the endoplasmic reticulum lumen. Involved in the correct folding of proteins and degradation of misfolded proteins via its interaction with DNAJC10/ERdj5, probably to facilitate the release of DNAJC10/ERdj5 from its substrate. Acts as a key repressor of the EIF2AK3/PERK and ERN1/IRE1-mediated unfolded protein response (UPR). In the unstressed endoplasmic reticulum, recruited by DNAJB9/ERdj4 to the luminal region of ERN1/IRE1, leading to disrupt the dimerization of ERN1/IRE1, thereby inactivating ERN1/IRE1. Also binds and inactivates EIF2AK3/PERK in unstressed cells. Accumulation of misfolded protein in the endoplasmic reticulum causes release of HSPA5/BiP from ERN1/IRE1 and EIF2AK3/PERK, allowing their homodimerization and subsequent activation. May also play a role in apoptosis and cell proliferation. The protein is Endoplasmic reticulum chaperone BiP of Gallus gallus (Chicken).